A 475-amino-acid polypeptide reads, in one-letter code: Adenosylhomocysteinase (475 aa).

Positions 61, 140, and 200 each coordinate substrate. 201–203 serves as a coordination point for NAD(+); that stretch reads TTT. Substrate contacts are provided by K230 and D234. Residues N235, 264–269, E287, N322, 343–345, and N388 each bind NAD(+); these read GYGDVG and IGH.

This sequence belongs to the adenosylhomocysteinase family. NAD(+) serves as cofactor.

The protein resides in the cytoplasm. The catalysed reaction is S-adenosyl-L-homocysteine + H2O = L-homocysteine + adenosine. It functions in the pathway amino-acid biosynthesis; L-homocysteine biosynthesis; L-homocysteine from S-adenosyl-L-homocysteine: step 1/1. Its function is as follows. May play a key role in the regulation of the intracellular concentration of adenosylhomocysteine. The sequence is that of Adenosylhomocysteinase from Paracidovorax citrulli (strain AAC00-1) (Acidovorax citrulli).